The following is a 610-amino-acid chain: Membrane protein insertase YidC (610 aa).

The chain crosses the membrane as a helical span at residues 7-27 (FFITIALSILILALWQVFYLG). The disordered stretch occupies residues 36–82 (QARIEEQQRQAQQAAQNRQASSSTGDTPQMPANPDSIPGQGDTKAAG). Residues 44–55 (RQAQQAAQNRQA) show a composition bias toward low complexity. Transmembrane regions (helical) follow at residues 358–378 (FDLLIDWGWFYFITKPMFYLI), 387–407 (NFGVAILVVTVLLKALFFPLA), 458–478 (WPVLVQIPVFFALYKVLYVTI), 510–530 (TVPHFLMIGVWPIIMGIIMFL), and 546–566 (IFTWMPIIFTFMLASFPAGLV).

Belongs to the OXA1/ALB3/YidC family. Type 1 subfamily. In terms of assembly, interacts with the Sec translocase complex via SecD. Specifically interacts with transmembrane segments of nascent integral membrane proteins during membrane integration.

Its subcellular location is the cell inner membrane. Its function is as follows. Required for the insertion and/or proper folding and/or complex formation of integral membrane proteins into the membrane. Involved in integration of membrane proteins that insert both dependently and independently of the Sec translocase complex, as well as at least some lipoproteins. Aids folding of multispanning membrane proteins. The polypeptide is Membrane protein insertase YidC (Brucella melitensis biotype 1 (strain ATCC 23456 / CCUG 17765 / NCTC 10094 / 16M)).